Reading from the N-terminus, the 232-residue chain is Large ribosomal subunit protein uL1 (232 aa).

The protein belongs to the universal ribosomal protein uL1 family. As to quaternary structure, part of the 50S ribosomal subunit.

In terms of biological role, binds directly to 23S rRNA. The L1 stalk is quite mobile in the ribosome, and is involved in E site tRNA release. Functionally, protein L1 is also a translational repressor protein, it controls the translation of the L11 operon by binding to its mRNA. The chain is Large ribosomal subunit protein uL1 from Sinorhizobium fredii (strain NBRC 101917 / NGR234).